Here is a 201-residue protein sequence, read N- to C-terminus: Diadenylate cyclase CdaS (201 aa).

A DAC domain is found at 54–201 (QTLAATYYIQ…LNGILYTISL (148 aa)).

It belongs to the adenylate cyclase family. DacB/CdaS subfamily. In terms of assembly, probably forms a homohexamer. Mg(2+) is required as a cofactor.

The catalysed reaction is 2 ATP = 3',3'-c-di-AMP + 2 diphosphate. Functionally, one of 3 paralogous diadenylate cyclases (DAC) in this bacteria catalyzing the condensation of 2 ATP molecules into cyclic di-AMP (c-di-AMP). It has slow DAC activity with ADP as a substrate and may have weak ADPase activity. Required for efficient spore formation, whereas in B.subtilis, it is required for efficient spore germination. It is produced under the control of different sigma factors in the two bacteria. It is also required for parasporal crystal formation. This chain is Diadenylate cyclase CdaS, found in Bacillus thuringiensis (strain BMB171).